A 282-amino-acid chain; its full sequence is Pantothenate synthetase (282 aa).

30–37 (MGFLHDGH) provides a ligand contact to ATP. His-37 serves as the catalytic Proton donor. Gln-60 serves as a coordination point for (R)-pantoate. Beta-alanine is bound at residue Gln-60. 146–149 (GQKD) is an ATP binding site. Gln-152 is a (R)-pantoate binding site. ATP contacts are provided by residues Ile-175 and 183–186 (KSSR).

The protein belongs to the pantothenate synthetase family. In terms of assembly, homodimer.

The protein resides in the cytoplasm. The catalysed reaction is (R)-pantoate + beta-alanine + ATP = (R)-pantothenate + AMP + diphosphate + H(+). The protein operates within cofactor biosynthesis; (R)-pantothenate biosynthesis; (R)-pantothenate from (R)-pantoate and beta-alanine: step 1/1. Its function is as follows. Catalyzes the condensation of pantoate with beta-alanine in an ATP-dependent reaction via a pantoyl-adenylate intermediate. The polypeptide is Pantothenate synthetase (Campylobacter jejuni (strain RM1221)).